The chain runs to 164 residues: Phosphopantetheine adenylyltransferase (164 aa).

Substrate is bound at residue S9. ATP-binding positions include 9–10 (SF) and H17. Substrate-binding residues include K41, V78, and R92. ATP is bound by residues 93–95 (GLR), E103, and 128–134 (VRTITAT).

This sequence belongs to the bacterial CoaD family. Homohexamer. It depends on Mg(2+) as a cofactor.

It is found in the cytoplasm. It catalyses the reaction (R)-4'-phosphopantetheine + ATP + H(+) = 3'-dephospho-CoA + diphosphate. It participates in cofactor biosynthesis; coenzyme A biosynthesis; CoA from (R)-pantothenate: step 4/5. In terms of biological role, reversibly transfers an adenylyl group from ATP to 4'-phosphopantetheine, yielding dephospho-CoA (dPCoA) and pyrophosphate. The sequence is that of Phosphopantetheine adenylyltransferase from Brucella suis (strain ATCC 23445 / NCTC 10510).